The primary structure comprises 238 residues: UDP-2,3-diacylglucosamine hydrolase (238 aa).

Positions 8, 10, 41, 78, and 113 each coordinate Mn(2+). Residue 78–79 (NR) participates in substrate binding. Substrate contacts are provided by Asp-121, Ser-159, Asn-163, Lys-166, and His-194. 2 residues coordinate Mn(2+): His-194 and His-196.

This sequence belongs to the LpxH family. The cofactor is Mn(2+).

Its subcellular location is the cell inner membrane. The enzyme catalyses UDP-2-N,3-O-bis[(3R)-3-hydroxytetradecanoyl]-alpha-D-glucosamine + H2O = 2-N,3-O-bis[(3R)-3-hydroxytetradecanoyl]-alpha-D-glucosaminyl 1-phosphate + UMP + 2 H(+). The protein operates within glycolipid biosynthesis; lipid IV(A) biosynthesis; lipid IV(A) from (3R)-3-hydroxytetradecanoyl-[acyl-carrier-protein] and UDP-N-acetyl-alpha-D-glucosamine: step 4/6. Its function is as follows. Hydrolyzes the pyrophosphate bond of UDP-2,3-diacylglucosamine to yield 2,3-diacylglucosamine 1-phosphate (lipid X) and UMP by catalyzing the attack of water at the alpha-P atom. Involved in the biosynthesis of lipid A, a phosphorylated glycolipid that anchors the lipopolysaccharide to the outer membrane of the cell. The chain is UDP-2,3-diacylglucosamine hydrolase from Shewanella halifaxensis (strain HAW-EB4).